The sequence spans 517 residues: uncharacterized protein (517 aa).

Disordered regions lie at residues 16-148, 156-175, and 216-351; these read KDES…TITK, VNKEINNNNNNNNNNNNTTT, and KLEK…EENE. Low complexity predominate over residues 48–75; it reads NNNNNNNNTTTTNNNTNNSNTSTSNNSK. The span at 84-112 shows a compositional bias: acidic residues; it reads FDDDDDDGDEEDEEEEDDDDDDDDDDDET. Pro residues predominate over residues 127-143; sequence QPQPQPQPQPQPQPPIK. Polar residues predominate over residues 236 to 252; that stretch reads VSSTLSNSFDPNIIHNQ. The segment covering 254–266 has biased composition (pro residues); the sequence is SPPPPPISIPIPL. 2 stretches are compositionally biased toward low complexity: residues 271–320 and 327–347; these read NLNN…NSNI and SSSMVNNVNNNSSDNSSSNNN. The stretch at 340-452 forms a coiled coil; that stretch reads DNSSSNNNEE…HQNQQNSMNN (113 aa).

It belongs to the ENTR1 family.

This is an uncharacterized protein from Dictyostelium discoideum (Social amoeba).